The primary structure comprises 279 residues: MSGTAEFPGRIPAPYLEVGSSSFVELLGSVAPELLPGRRPLPPGDMGDAAPHGTTIVALRCNEGVVMAGDRRATQGNMISLRDIQKVFPADAYSLIGIAGTAGLGVEMIRLFQAELEHFEKLEGNALSLHGKANKLANMIRGNLGIAMQGLAVLPLFAGFDTDAPDAASAGRIFSYDVVGGIYEEREYDAIGSGSIFAKSALKKRFQSEVDATEATRLAIEALYDAADDDSATGGPDLTRKLFPTVFTATADGAKRVPDAEIEAVSRAVVAARLENPGG.

Residues 1–53 constitute a propeptide, removed in mature form; by autocatalysis; it reads MSGTAEFPGRIPAPYLEVGSSSFVELLGSVAPELLPGRRPLPPGDMGDAAPHG. The Nucleophile role is filled by Thr-54.

This sequence belongs to the peptidase T1B family. As to quaternary structure, the 20S proteasome core is composed of 14 alpha and 14 beta subunits that assemble into four stacked heptameric rings, resulting in a barrel-shaped structure. The two inner rings, each composed of seven catalytic beta subunits, are sandwiched by two outer rings, each composed of seven alpha subunits. The catalytic chamber with the active sites is on the inside of the barrel. Has a gated structure, the ends of the cylinder being occluded by the N-termini of the alpha-subunits. Is capped by the proteasome-associated ATPase, ARC.

It is found in the cytoplasm. It catalyses the reaction Cleavage of peptide bonds with very broad specificity.. Its pathway is protein degradation; proteasomal Pup-dependent pathway. Its activity is regulated as follows. The formation of the proteasomal ATPase ARC-20S proteasome complex, likely via the docking of the C-termini of ARC into the intersubunit pockets in the alpha-rings, may trigger opening of the gate for substrate entry. Interconversion between the open-gate and close-gate conformations leads to a dynamic regulation of the 20S proteasome proteolysis activity. In terms of biological role, component of the proteasome core, a large protease complex with broad specificity involved in protein degradation. The protein is Proteasome subunit beta of Stackebrandtia nassauensis (strain DSM 44728 / CIP 108903 / NRRL B-16338 / NBRC 102104 / LLR-40K-21).